The primary structure comprises 295 residues: Nucleotide-binding protein BLi03725/BL03417 (295 aa).

Position 16–23 (16–23) interacts with ATP; it reads GMSGAGKT. Position 67–70 (67–70) interacts with GTP; that stretch reads DLRG.

This sequence belongs to the RapZ-like family.

Displays ATPase and GTPase activities. The polypeptide is Nucleotide-binding protein BLi03725/BL03417 (Bacillus licheniformis (strain ATCC 14580 / DSM 13 / JCM 2505 / CCUG 7422 / NBRC 12200 / NCIMB 9375 / NCTC 10341 / NRRL NRS-1264 / Gibson 46)).